A 186-amino-acid chain; its full sequence is Elongation factor P (186 aa).

Belongs to the elongation factor P family.

The protein resides in the cytoplasm. It participates in protein biosynthesis; polypeptide chain elongation. In terms of biological role, involved in peptide bond synthesis. Stimulates efficient translation and peptide-bond synthesis on native or reconstituted 70S ribosomes in vitro. Probably functions indirectly by altering the affinity of the ribosome for aminoacyl-tRNA, thus increasing their reactivity as acceptors for peptidyl transferase. The sequence is that of Elongation factor P from Neisseria meningitidis serogroup A / serotype 4A (strain DSM 15465 / Z2491).